The following is an 858-amino-acid chain: G2-specific protein kinase nim-1 (858 aa).

Positions 7-290 constitute a Protein kinase domain; sequence YELLEKIGHG…TATLLNLPIV (284 aa). ATP-binding positions include 13-21 and K36; that span reads IGHGSFGII. The active-site Proton acceptor is D161. Phosphothreonine; by autocatalysis is present on T194. A coiled-coil region spans residues 291–383; sequence RLMRKEKEVV…QARVEAELQR (93 aa). Disordered regions lie at residues 495–693 and 747–858; these read TKAP…LPQA and SAVD…LSQS. The span at 516–525 shows a compositional bias: basic and acidic residues; the sequence is SNWEVPRETE. The span at 526–535 shows a compositional bias: acidic residues; the sequence is MIDSGDESEA. Polar residues-rich tracts occupy residues 548–572 and 580–598; these read SSKN…NSNV and SKQT…SSIG. The span at 636-648 shows a compositional bias: low complexity; it reads SANNINNSSNGGS. The segment covering 650-661 has biased composition (polar residues); it reads APSSTVTSNITV. The span at 676–691 shows a compositional bias: low complexity; that stretch reads SSFSQQQNNQPQQSLP. Positions 760–780 are enriched in polar residues; the sequence is GQSQLPTRPRSQPQPITANFE. Over residues 781-802 the composition is skewed to low complexity; the sequence is QQQQQQQSNTNSISSSNSAGSG.

It belongs to the protein kinase superfamily. CAMK Ser/Thr protein kinase family.

It localises to the nucleus. It catalyses the reaction L-seryl-[protein] + ATP = O-phospho-L-seryl-[protein] + ADP + H(+). The catalysed reaction is L-threonyl-[protein] + ATP = O-phospho-L-threonyl-[protein] + ADP + H(+). Its function is as follows. Protein kinase that plays an important role in mitotic regulation. The polypeptide is G2-specific protein kinase nim-1 (nim-1) (Neurospora crassa (strain ATCC 24698 / 74-OR23-1A / CBS 708.71 / DSM 1257 / FGSC 987)).